Consider the following 722-residue polypeptide: Polyribonucleotide nucleotidyltransferase (722 aa).

Mg(2+)-binding residues include D487 and D493. Positions 554-613 (PRMVSFKIHPDKIREVIGKGGATIQALTKETGCSIDIKDDGTVTIASTSAEGMAEAKARI) constitute a KH domain. An S1 motif domain is found at 623–691 (GKIYEGPVVK…ERGRLRLSLK (69 aa)).

Belongs to the polyribonucleotide nucleotidyltransferase family. Mg(2+) serves as cofactor.

The protein resides in the cytoplasm. The enzyme catalyses RNA(n+1) + phosphate = RNA(n) + a ribonucleoside 5'-diphosphate. Functionally, involved in mRNA degradation. Catalyzes the phosphorolysis of single-stranded polyribonucleotides processively in the 3'- to 5'-direction. In Polynucleobacter asymbioticus (strain DSM 18221 / CIP 109841 / QLW-P1DMWA-1) (Polynucleobacter necessarius subsp. asymbioticus), this protein is Polyribonucleotide nucleotidyltransferase.